The following is a 118-amino-acid chain: Large ribosomal subunit protein bL20 (118 aa).

The protein belongs to the bacterial ribosomal protein bL20 family.

Functionally, binds directly to 23S ribosomal RNA and is necessary for the in vitro assembly process of the 50S ribosomal subunit. It is not involved in the protein synthesizing functions of that subunit. This Thermosipho melanesiensis (strain DSM 12029 / CIP 104789 / BI429) protein is Large ribosomal subunit protein bL20.